The primary structure comprises 322 residues: MSVTDCFTQINSFTQINHFTETHRYVGRFAPSPSGDLHFGSLIAALGSYLQARSQQGRWLVRIEDIDPPREIPGAASRILAQLEHYGLYWDGDVVYQSQHHARYREILQQLQQQGMSYYCTCTRSRIQQLGGRYDGYCRTRNLSADNAAQRLRQTTPVFHFHDKLRGNLYADKTLAQEDFIIHRRDGLFAYNLAVVIDDNDQGITEIVRGADLIEPTVRQISLYQQLDYAIPTYVHLPLVLNTEGNKLSKQNHAPALPDSDPRPVLLAALQFLNQPLPENGQEMTLSALLAWSVAHWSLNIVPLQAAINTSTFTSAFSKGPW.

L-glutamate is bound by residues 28–32 (RFAPS) and Glu-64. The short motif at 31-41 (PSPSGDLHFGS) is the 'HIGH' region element. Positions 120, 122, 134, and 138 each coordinate Zn(2+). Positions 191 and 209 each coordinate L-glutamate. Positions 247–251 (KLSKQ) match the 'KMSKS' region motif. Lys-250 contributes to the ATP binding site.

Belongs to the class-I aminoacyl-tRNA synthetase family. GluQ subfamily. Zn(2+) is required as a cofactor.

In terms of biological role, catalyzes the tRNA-independent activation of glutamate in presence of ATP and the subsequent transfer of glutamate onto a tRNA(Asp). Glutamate is transferred on the 2-amino-5-(4,5-dihydroxy-2-cyclopenten-1-yl) moiety of the queuosine in the wobble position of the QUC anticodon. The sequence is that of Glutamyl-Q tRNA(Asp) synthetase from Pectobacterium atrosepticum (strain SCRI 1043 / ATCC BAA-672) (Erwinia carotovora subsp. atroseptica).